The sequence spans 1066 residues: Isoleucine--tRNA ligase (1066 aa).

Residues 49–59 (PYVSGAIHLGT) carry the 'HIGH' region motif. Residues 625-629 (KMSKS) carry the 'KMSKS' region motif. K628 is a binding site for ATP.

This sequence belongs to the class-I aminoacyl-tRNA synthetase family. IleS type 2 subfamily. As to quaternary structure, monomer. The cofactor is Zn(2+).

The protein localises to the cytoplasm. It carries out the reaction tRNA(Ile) + L-isoleucine + ATP = L-isoleucyl-tRNA(Ile) + AMP + diphosphate. In terms of biological role, catalyzes the attachment of isoleucine to tRNA(Ile). As IleRS can inadvertently accommodate and process structurally similar amino acids such as valine, to avoid such errors it has two additional distinct tRNA(Ile)-dependent editing activities. One activity is designated as 'pretransfer' editing and involves the hydrolysis of activated Val-AMP. The other activity is designated 'posttransfer' editing and involves deacylation of mischarged Val-tRNA(Ile). The chain is Isoleucine--tRNA ligase from Pyrococcus furiosus (strain ATCC 43587 / DSM 3638 / JCM 8422 / Vc1).